Consider the following 430-residue polypeptide: ATP-dependent RNA helicase cgh-1 (430 aa).

A Q motif motif is present at residues 43-71 (VEFEDFCLGRDLLMGIFEKGWEKPSPIQE). The region spanning 74 to 244 (IGVALTGQDI…QKHMHKPYEI (171 aa)) is the Helicase ATP-binding domain. 87-94 (AKNGTGKT) is a binding site for ATP. Residues 192–195 (DEAD) carry the DEAD box motif. The Helicase C-terminal domain occupies 254–414 (GVTQYYAFVQ…PIPKTVDPKL (161 aa)).

The protein belongs to the DEAD box helicase family. DDX6/DHH1 subfamily. As to quaternary structure, interacts with car-1 in a germline ribonucleoprotein complex. Interacts with ifet-1. Interacts with oma-1, which is a component of a ribonucleoprotein complex, in an RNA-dependent manner. In terms of tissue distribution, expression is restricted to two germline precursors Z2 and Z3 in L1 stage hermaphrodites, and is detectable specifically in the gonad at low levels into the L3 stage. Expression is significantly higher during the early L4 stage. In adults, expression remains gonad-specific and was not apparent in the somatically derived uterus. Expressed in germ granules (P granules); when associated with pgl-1.

It localises to the cytoplasm. It catalyses the reaction ATP + H2O = ADP + phosphate + H(+). Probable RNA helicase required for oocyte and sperm function. Also required to prevent the physiological germline apoptosis mechanism killing essentially all developing oocytes. The sequence is that of ATP-dependent RNA helicase cgh-1 (cgh-1) from Caenorhabditis elegans.